The following is a 66-amino-acid chain: Large ribosomal subunit protein bL35 (66 aa).

Positions 1–26 are enriched in basic residues; the sequence is MPKMKTHRGSAKRFKKTGSGKLKRSH. The segment at 1–48 is disordered; it reads MPKMKTHRGSAKRFKKTGSGKLKRSHAYTSHLFANKSQKQKRKLRKSA.

The protein belongs to the bacterial ribosomal protein bL35 family.

The polypeptide is Large ribosomal subunit protein bL35 (Bacillus licheniformis (strain ATCC 14580 / DSM 13 / JCM 2505 / CCUG 7422 / NBRC 12200 / NCIMB 9375 / NCTC 10341 / NRRL NRS-1264 / Gibson 46)).